We begin with the raw amino-acid sequence, 76 residues long: Omega-scoloptoxin(13)-Ssm2a (76 aa).

The N-terminal stretch at methionine 1 to alanine 22 is a signal peptide.

Contains 4 disulfide bonds. Expressed by the venom gland.

Its subcellular location is the secreted. Its function is as follows. Inhibits voltage-gated calcium channel (Cav) currents in DRG neurons (IC(50)=1590 nM). In Scolopendra mutilans (Chinese red-headed centipede), this protein is Omega-scoloptoxin(13)-Ssm2a.